The following is a 198-amino-acid chain: Nucleoid occlusion factor SlmA (198 aa).

The HTH tetR-type domain maps to 10 to 70 (NRREEILQSL…SLIEFIEDSL (61 aa)). The segment at residues 33–52 (TTAKLAASVGVSEAALYRHF) is a DNA-binding region (H-T-H motif). Residues 117-144 (EQDRLQGRINQLFERIEAQLRQVLREKR) are a coiled coil.

This sequence belongs to the nucleoid occlusion factor SlmA family. As to quaternary structure, homodimer. Interacts with FtsZ.

The protein resides in the cytoplasm. It localises to the nucleoid. Its function is as follows. Required for nucleoid occlusion (NO) phenomenon, which prevents Z-ring formation and cell division over the nucleoid. Acts as a DNA-associated cell division inhibitor that binds simultaneously chromosomal DNA and FtsZ, and disrupts the assembly of FtsZ polymers. SlmA-DNA-binding sequences (SBS) are dispersed on non-Ter regions of the chromosome, preventing FtsZ polymerization at these regions. The polypeptide is Nucleoid occlusion factor SlmA (Escherichia coli O127:H6 (strain E2348/69 / EPEC)).